The chain runs to 75 residues: Small ribosomal subunit protein bS16 (75 aa).

The protein belongs to the bacterial ribosomal protein bS16 family.

The sequence is that of Small ribosomal subunit protein bS16 from Aliarcobacter butzleri (strain RM4018) (Arcobacter butzleri).